We begin with the raw amino-acid sequence, 309 residues long: Histidine protein methyltransferase 1 homolog (309 aa).

2 disordered regions span residues 1 to 37 and 79 to 111; these read MSFKFNFQVDEDENDNGNNNEQNNEESKLDISEFDSS and KPFKGNQDNNNDNNVNSNDKNDNNNNNNNNNKD. Residues 25 to 37 show a composition bias toward basic and acidic residues; it reads EESKLDISEFDSS. Low complexity predominate over residues 84–109; sequence NQDNNNDNNVNSNDKNDNNNNNNNNN. S-adenosyl-L-methionine contacts are provided by residues 132 to 136, Gly159, 179 to 181, 209 to 211, and Ser229; these read LWECS, QDY, and GDW.

It belongs to the methyltransferase superfamily. METTL18 family.

It localises to the cytoplasm. Its subcellular location is the cytosol. It is found in the nucleus. The protein localises to the nucleolus. It catalyses the reaction L-histidyl-[protein] + S-adenosyl-L-methionine = N(tele)-methyl-L-histidyl-[protein] + S-adenosyl-L-homocysteine + H(+). In terms of biological role, protein-L-histidine N-tele-methyltransferase that probably monomethylates RPL3. Through the methylation of RPL3 may regulate the dynamics of pre-rRNA processing, ribosome biogenesis, and translation. This Dictyostelium discoideum (Social amoeba) protein is Histidine protein methyltransferase 1 homolog.